A 420-amino-acid chain; its full sequence is LanC-like protein 3 homolog (420 aa).

The protein belongs to the LanC-like protein family.

This chain is LanC-like protein 3 homolog, found in Drosophila pseudoobscura pseudoobscura (Fruit fly).